The chain runs to 1036 residues: Hexagonally packed intermediate-layer surface protein (1036 aa).

Positions 1–17 are cleaved as a signal peptide; that stretch reads MKKNIALMALTGVLTLA. 3 disulfide bridges follow: Cys-74–Cys-86, Cys-256–Cys-275, and Cys-642–Cys-754.

In terms of processing, glycosylated; contains six glycans. Acylated in the N-terminal region. Post-translationally, the N-terminus is blocked.

Its subcellular location is the secreted. It localises to the cell wall. It is found in the S-layer. Functionally, shape maintenance, possible protection from noxious enzymes or exogenous and unsettling DNA, and may mediate homotypic cell-cell contacts. The polypeptide is Hexagonally packed intermediate-layer surface protein (hpi) (Deinococcus radiodurans).